The chain runs to 537 residues: uncharacterized protein (537 aa).

6 helical membrane-spanning segments follow: residues 5 to 25 (IGLG…PWFV), 40 to 60 (LAVA…FFGW), 63 to 83 (VLWV…MAVV), 115 to 135 (GLYY…HLEG), 149 to 169 (VYLL…WVTL), and 197 to 217 (VGIV…ALVI).

The protein resides in the plastid. It is found in the chloroplast membrane. This is an uncharacterized protein from Ostreococcus tauri.